Consider the following 428-residue polypeptide: Enolase (428 aa).

Q167 is a binding site for (2R)-2-phosphoglycerate. E209 serves as the catalytic Proton donor. 3 residues coordinate Mg(2+): D246, E289, and D316. K341, R370, S371, and K392 together coordinate (2R)-2-phosphoglycerate. K341 (proton acceptor) is an active-site residue.

It belongs to the enolase family. Component of the RNA degradosome, a multiprotein complex involved in RNA processing and mRNA degradation. The cofactor is Mg(2+).

The protein resides in the cytoplasm. The protein localises to the secreted. It localises to the cell surface. It catalyses the reaction (2R)-2-phosphoglycerate = phosphoenolpyruvate + H2O. The protein operates within carbohydrate degradation; glycolysis; pyruvate from D-glyceraldehyde 3-phosphate: step 4/5. Catalyzes the reversible conversion of 2-phosphoglycerate (2-PG) into phosphoenolpyruvate (PEP). It is essential for the degradation of carbohydrates via glycolysis. The protein is Enolase of Saccharophagus degradans (strain 2-40 / ATCC 43961 / DSM 17024).